We begin with the raw amino-acid sequence, 354 residues long: 4-hydroxy-3-methylbut-2-en-1-yl diphosphate synthase (flavodoxin) (354 aa).

[4Fe-4S] cluster-binding residues include C262, C265, C297, and E304.

Belongs to the IspG family. [4Fe-4S] cluster is required as a cofactor.

The enzyme catalyses (2E)-4-hydroxy-3-methylbut-2-enyl diphosphate + oxidized [flavodoxin] + H2O + 2 H(+) = 2-C-methyl-D-erythritol 2,4-cyclic diphosphate + reduced [flavodoxin]. Its pathway is isoprenoid biosynthesis; isopentenyl diphosphate biosynthesis via DXP pathway; isopentenyl diphosphate from 1-deoxy-D-xylulose 5-phosphate: step 5/6. Its function is as follows. Converts 2C-methyl-D-erythritol 2,4-cyclodiphosphate (ME-2,4cPP) into 1-hydroxy-2-methyl-2-(E)-butenyl 4-diphosphate. This Helicobacter hepaticus (strain ATCC 51449 / 3B1) protein is 4-hydroxy-3-methylbut-2-en-1-yl diphosphate synthase (flavodoxin).